A 169-amino-acid chain; its full sequence is MGWSQDLFRALWRSLSREVKEHVGTDQFGNKYYYIPQYKNWRGQTIREKRIVEAANKKEVDYEAGDIPTEWEAWIRRTRKTPPTMEEILKNEKHREEIKIKSQDFYEKEKLLSKETSEELLPPPVQTQIKGHASAPYFGKEEPSVAPSSTGKTFQPGSWMPRDGKSHNQ.

Residues 116-169 (TSEELLPPPVQTQIKGHASAPYFGKEEPSVAPSSTGKTFQPGSWMPRDGKSHNQ) are disordered. Residue Ser-134 is modified to Phosphoserine. The segment covering 146 to 156 (APSSTGKTFQP) has biased composition (polar residues).

Belongs to the complex I NDUFA12 subunit family. In terms of assembly, interacts with ARMC9. As to expression, highly expressed in ESCC cells. Also expressed in heart, skeletal muscle, liver, and in fibroblasts.

The protein resides in the mitochondrion. Its function is as follows. Acts as a molecular chaperone for mitochondrial complex I assembly. Complex I functions in the transfer of electrons from NADH to the respiratory chain. The immediate electron acceptor for the enzyme is believed to be ubiquinone. Is involved in the initial steps of cilia formation, including removal of CP110 from the mother centrioles, docking of membrane vesicles to the mother centrioles, and establishment of the transition zone. This chain is NADH dehydrogenase [ubiquinone] 1 alpha subcomplex assembly factor 2 (NDUFAF2), found in Homo sapiens (Human).